The sequence spans 501 residues: MTSTSDTKVCKNQGGLLEIKMEEECKYTTRQDRNLQKNTYNRDVFRKYFRQFCYQETSGPREALSRLRELCRQWLRPDLNSKEQILELLVLEQFLTILPGELQAWVQEQNPESVEEVVTVLEDLERELDELGYRASVQTEEQVTFQEVKPLATEQKPSVSLQFVKAKPGCELAGREAQEEQVSGVETGNEPRNVTLKQGLWEGTEAEQNPASRLAKDALECEEAHNPGEESSGISHEDSQPLRNENGVNSPANSEYAKHQSICPGRKVHGCDECGKSFTQHSRLIEHKRVHTGDRPYKCEVCGKTFRWRTVLIRHKVVHTGEKPYKCNECGRAFGQWSALNQHQRLHSGEKHYHCNECGKAFCQKAGLFHHLKSHRRNRPYQCLQCNKSFNRRSTLSQHQGVHTGAKPYECNDCGKAFVYNSSLATHQETHHKEKPFTQSGPIQQQRNHTKEKPYKCSVCGKAFIQKISLIEHEQIHTGERPYKCAEGGKAFIQMSELTEH.

Residues lysine 20 and lysine 26 each participate in a glycyl lysine isopeptide (Lys-Gly) (interchain with G-Cter in SUMO2) cross-link. The 82-residue stretch at 51–132 folds into the SCAN box domain; it reads QFCYQETSGP…DLERELDELG (82 aa). Residues 175-194 form a disordered region; sequence REAQEEQVSGVETGNEPRNV. Residues 180 to 194 show a composition bias toward polar residues; it reads EQVSGVETGNEPRNV. Lysine 197 participates in a covalent cross-link: Glycyl lysine isopeptide (Lys-Gly) (interchain with G-Cter in SUMO2). Positions 223-255 are disordered; it reads EAHNPGEESSGISHEDSQPLRNENGVNSPANSE. Residues 241-253 show a composition bias toward polar residues; it reads PLRNENGVNSPAN. C2H2-type zinc fingers lie at residues 269 to 291, 297 to 319, 325 to 347, 353 to 375, 381 to 403, and 409 to 431; these read HGCD…KRVH, YKCE…KVVH, YKCN…QRLH, YHCN…LKSH, YQCL…QGVH, and YECN…QETH. The disordered stretch occupies residues 429–450; it reads ETHHKEKPFTQSGPIQQQRNHT. Polar residues predominate over residues 437–447; that stretch reads FTQSGPIQQQR. The C2H2-type 7 zinc-finger motif lies at 455–477; sequence YKCSVCGKAFIQKISLIEHEQIH. The segment at 483–501 adopts a C2H2-type 8; degenerate zinc-finger fold; sequence YKCAEGGKAFIQMSELTEH.

This sequence belongs to the krueppel C2H2-type zinc-finger protein family. Testis specific.

It localises to the nucleus. May be involved in transcriptional regulation. This Mus musculus (Mouse) protein is Zinc finger and SCAN domain-containing protein 12 (Zscan12).